Consider the following 4351-residue polypeptide: Protocadherin Fat 2 (4351 aa).

An N-terminal signal peptide occupies residues 1-18 (MTLVLLGLAILLLHRAAC). Over 19–4050 (EKSLEETIPP…IKRGDWGQQE (4032 aa)) the chain is Extracellular. 2 consecutive Cadherin domains span residues 34 to 148 (THSL…KPLF) and 149 to 256 (SPPS…PPAI). 4 N-linked (GlcNAc...) asparagine glycosylation sites follow: Asn39, Asn210, Asn280, and Asn330. Cadherin domains follow at residues 363-458 (EKAV…APVF), 459-564 (NRSS…QPMF), 565-669 (EEVN…VPVQ), 716-820 (DHFP…PPRF), 821-925 (PPGG…PPQC), 926-1032 (ITEH…SPHF), 1033-1142 (SSFV…RPVF), 1138-1242 (SRPV…PPMF), 1243-1346 (SHKL…SSIP), 1350-1448 (DESY…RPQF), 1449-1555 (LQDH…SPHF), 1556-1660 (TQLR…APVF), 1661-1758 (SKDE…PPAF), 1759-1872 (GKPT…PPRF), 1873-1968 (SEQI…SLQF), 1969-2070 (DQDV…IPEF), 2071-2171 (QHLP…NPLF), 2172-2272 (QSPY…PPTF), 2273-2379 (SQLV…PPKF), 2380-2481 (REPQ…SPEF), 2482-2585 (QQNV…APQF), 2586-2692 (KASG…LPKF), 2693-2799 (SEPL…RPVF), 2800-2908 (EADP…PPRF), 2909-3013 (ASED…SPQC), 3014-3115 (SQLL…APRF), 3116-3220 (FPSH…LPIF), 3221-3323 (LNAE…HPRF), 3324-3428 (THDL…PPRF), 3429-3533 (FQLN…PPST), and 3534-3631 (LPLE…VPQQ). N-linked (GlcNAc...) asparagine glycans are attached at residues Asn459, Asn568, Asn627, and Asn789. Asn996 carries an N-linked (GlcNAc...) asparagine glycan. N-linked (GlcNAc...) asparagine glycosylation is found at Asn1175, Asn1276, and Asn1417. N-linked (GlcNAc...) asparagine glycans are attached at residues Asn1899, Asn1998, Asn2007, Asn2102, Asn2165, Asn2183, Asn2325, Asn2368, Asn2387, Asn2430, Asn2470, Asn2547, and Asn2597. Residues Asn3127, Asn3278, and Asn3312 are each glycosylated (N-linked (GlcNAc...) asparagine). N-linked (GlcNAc...) asparagine glycosylation is found at Asn3432, Asn3603, Asn3770, Asn3774, Asn3815, Asn3842, Asn3875, and Asn3906. A Laminin G-like domain is found at 3775 to 3946 (GTTLRFSGQS…RLETWALSQC (172 aa)). Disulfide bonds link Cys3914-Cys3946, Cys3953-Cys3964, Cys3958-Cys3974, and Cys3976-Cys3985. EGF-like domains lie at 3949 to 3986 (PGTA…RNCE) and 3988 to 4024 (GREN…DRCE). Asn3991 carries an N-linked (GlcNAc...) asparagine glycan. 3 cysteine pairs are disulfide-bonded: Cys3992/Cys4003, Cys3997/Cys4012, and Cys4014/Cys4023. The helical transmembrane segment at 4051–4071 (FLVITVALPLVIIATVGLLLY) threads the bilayer. Over 4072 to 4351 (CRRRKSHKPV…DYGSCEEVMF (280 aa)) the chain is Cytoplasmic. Residues 4316–4340 (VNGGPATGRSQPRAPPNYEGSDMVE) form a disordered region.

In terms of assembly, homodimer. Cerebellum-specific expression. Expressed in thin parallel fibers of cerebellar granule cells.

Its subcellular location is the cell membrane. The protein localises to the cell junction. It localises to the golgi apparatus. It is found in the trans-Golgi network. Its function is as follows. Involved in the regulation of cell migration. May be involved in mediating the organization of the parallel fibers of granule cells during cerebellar development. This Rattus norvegicus (Rat) protein is Protocadherin Fat 2 (Fat2).